We begin with the raw amino-acid sequence, 259 residues long: UPF0246 protein PP_1289 (259 aa).

The protein belongs to the UPF0246 family.

The sequence is that of UPF0246 protein PP_1289 from Pseudomonas putida (strain ATCC 47054 / DSM 6125 / CFBP 8728 / NCIMB 11950 / KT2440).